Here is a 583-residue protein sequence, read N- to C-terminus: Pentatricopeptide repeat-containing protein At3g59040 (583 aa).

PPR repeat units lie at residues 138–172 (SEIDFLMLITAYGKLGNFNGAERVLSVLSKMGSTP), 173–207 (NVISYTALMESYGRGGKCNNAEAIFRRMQSSGPEP), 208–242 (SAITYQIILKTFVEGDKFKEAEEVFETLLDEKKSP), 246–280 (DQKMYHMMIYMYKKAGNYEKARKVFSSMVGKGVPQ), 281–312 (STVTYNSLMSFETSYKEVSKIYDQMQRSDIQP), 313–347 (DVVSYALLIKAYGRARREEEALSVFEEMLDAGVRP), 348–382 (THKAYNILLDAFAISGMVEQAKTVFKSMRRDRIFP), 383–417 (DLWSYTTMLSAYVNASDMEGAEKFFKRIKVDGFEP), 418–452 (NIVTYGTLIKGYAKANDVEKMMEVYEKMRLSGIKA), and 453–487 (NQTILTTIMDASGRCKNFGSALGWYKEMESCGVPP). Residues 525-583 (VYGSDDDEEGVEDISSESSDDEDEGDDDDDDARETVLYDKPQEGSLGYGSLQTEELVGL) are disordered. Acidic residues predominate over residues 528 to 556 (SDDDEEGVEDISSESSDDEDEGDDDDDDA). Over residues 557–566 (RETVLYDKPQ) the composition is skewed to basic and acidic residues.

Belongs to the PPR family. P subfamily.

This Arabidopsis thaliana (Mouse-ear cress) protein is Pentatricopeptide repeat-containing protein At3g59040.